We begin with the raw amino-acid sequence, 412 residues long: Protein png-1 (412 aa).

The Zn(2+) site is built by Cys-150, Cys-153, Cys-182, and Cys-185. Positions Ala-363–Pro-412 are disordered.

The protein belongs to the transglutaminase-like superfamily. PNGase family.

The protein is Protein png-1 (un-7) of Neurospora crassa (strain ATCC 24698 / 74-OR23-1A / CBS 708.71 / DSM 1257 / FGSC 987).